The following is a 122-amino-acid chain: Histone H2B 1 (122 aa).

A disordered region spans residues 1–30 (MPPKPSAKGAKKAAKTVTKPKDGKKRRHAR). Ser109 carries O-linked (GlcNAc) serine glycosylation. Residue Lys117 forms a Glycyl lysine isopeptide (Lys-Gly) (interchain with G-Cter in ubiquitin) linkage.

This sequence belongs to the histone H2B family. The nucleosome is a histone octamer containing two molecules each of H2A, H2B, H3 and H4 assembled in one H3-H4 heterotetramer and two H2A-H2B heterodimers. The octamer wraps approximately 147 bp of DNA. Post-translationally, monoubiquitination of Lys-117 gives a specific tag for epigenetic transcriptional activation and is also prerequisite for histone H3 'Lys-4' and 'Lys-79' methylation. GlcNAcylation at Ser-109 promotes monoubiquitination of Lys-117. It fluctuates in response to extracellular glucose, and associates with transcribed genes.

The protein localises to the nucleus. It is found in the chromosome. Core component of nucleosome. Nucleosomes wrap and compact DNA into chromatin, limiting DNA accessibility to the cellular machineries which require DNA as a template. Histones thereby play a central role in transcription regulation, DNA repair, DNA replication and chromosomal stability. DNA accessibility is regulated via a complex set of post-translational modifications of histones, also called histone code, and nucleosome remodeling. The chain is Histone H2B 1 (his-11) from Caenorhabditis elegans.